The primary structure comprises 469 residues: 1-aminocyclopropane-1-carboxylate synthase 3 (469 aa).

Lys272 bears the N6-(pyridoxal phosphate)lysine mark. The segment at 432-452 (APNATNHQNQQQSNANSKKKS) is disordered. Residues 437 to 447 (NHQNQQQSNAN) are compositionally biased toward low complexity.

This sequence belongs to the class-I pyridoxal-phosphate-dependent aminotransferase family. In terms of assembly, homodimer. It depends on pyridoxal 5'-phosphate as a cofactor.

It catalyses the reaction S-adenosyl-L-methionine = 1-aminocyclopropane-1-carboxylate + S-methyl-5'-thioadenosine + H(+). It functions in the pathway alkene biosynthesis; ethylene biosynthesis via S-adenosyl-L-methionine; ethylene from S-adenosyl-L-methionine: step 1/2. Functionally, catalyzes the formation of 1-aminocyclopropane-1-carboxylate, a direct precursor of ethylene in higher plants. The protein is 1-aminocyclopropane-1-carboxylate synthase 3 (ACS3) of Solanum lycopersicum (Tomato).